Consider the following 74-residue polypeptide: Antimicrobial peptide HsAp4 (74 aa).

The signal sequence occupies residues 1 to 21; sequence MSRRRILILVLVTMLVKTMAG. A propeptide spanning residues 22–33 is cleaved from the precursor; it reads MESKWVETTYEI. R65 is modified (arginine amide). Positions 69 to 74 are excised as a propeptide; the sequence is AISEQT.

The protein belongs to the non-disulfide-bridged peptide (NDBP) superfamily. Medium-length antimicrobial peptide (group 3) family. As to expression, expressed by the venom gland.

The protein resides in the secreted. It is found in the target cell membrane. Its function is as follows. Possesses antimicrobial activity against both Gram-negative and Gram-positive bacteria, as well as against the fungus C.tropicalis. Also possesses a relatively high hemolytic activity. May act by disrupting the integrity of the bacterial cell membrane. The polypeptide is Antimicrobial peptide HsAp4 (Heterometrus spinifer (Asia giant forest scorpion)).